A 109-amino-acid chain; its full sequence is MAETLTVEVMFGGGAELLFNKVKRKEIALPPLKTFLPDSQNQNWTLKELLIWLKDNLLVEREELFLKDDSVRPGILVLINEEDWELHGQLNYELKENDKIMFISTLHGG.

G109 bears the 1-thioglycine mark. G109 is covalently cross-linked (Glycyl lysine isopeptide (Gly-Lys) (interchain with K-? in acceptor proteins)).

Belongs to the URM1 family. C-terminal thiocarboxylation occurs in 2 steps, it is first acyl-adenylated (-COAMP) via the hesA/moeB/thiF part of the MOCS3 homolog, then thiocarboxylated (-COSH) via the rhodanese domain of the MOCS3 homolog.

The protein resides in the cytoplasm. It participates in tRNA modification; 5-methoxycarbonylmethyl-2-thiouridine-tRNA biosynthesis. Acts as a sulfur carrier required for 2-thiolation of mcm(5)S(2)U at tRNA wobble positions of cytosolic tRNA(Lys), tRNA(Glu) and tRNA(Gln). Serves as sulfur donor in tRNA 2-thiolation reaction by being thiocarboxylated (-COSH) at its C-terminus by MOCS3. The sulfur is then transferred to tRNA to form 2-thiolation of mcm(5)S(2)U. Also acts as a ubiquitin-like protein (UBL) that is covalently conjugated via an isopeptide bond to lysine residues of target proteins. The thiocarboxylated form serves as substrate for conjugation and oxidative stress specifically induces the formation of UBL-protein conjugates. The protein is Ubiquitin-related modifier 1 homolog of Bombyx mori (Silk moth).